A 256-amino-acid polypeptide reads, in one-letter code: Pimeloyl-[acyl-carrier protein] methyl ester esterase (256 aa).

The 228-residue stretch at 15 to 242 (HLVLLHGWGL…AAHAPFISHP (228 aa)) folds into the AB hydrolase-1 domain. Substrate is bound by residues W22, 82-83 (SL), and 143-147 (FLALQ). The active-site Nucleophile is the S82. Catalysis depends on residues D207 and H235. Substrate is bound at residue H235.

It belongs to the AB hydrolase superfamily. Carboxylesterase BioH family. Monomer.

The protein resides in the cytoplasm. The enzyme catalyses 6-carboxyhexanoyl-[ACP] methyl ester + H2O = 6-carboxyhexanoyl-[ACP] + methanol + H(+). It participates in cofactor biosynthesis; biotin biosynthesis. Its function is as follows. The physiological role of BioH is to remove the methyl group introduced by BioC when the pimeloyl moiety is complete. It allows to synthesize pimeloyl-ACP via the fatty acid synthetic pathway through the hydrolysis of the ester bonds of pimeloyl-ACP esters. This Escherichia coli (strain SMS-3-5 / SECEC) protein is Pimeloyl-[acyl-carrier protein] methyl ester esterase.